The chain runs to 597 residues: MLSSSHLKPSAPSATLLRFLRSQSDFLSVNSSRCARPSRSKPYVHQILPCNASSRASSTWTCTASAPHRTTLQTSLVRTPTPAARSHSSSRPRLWLCAGQAGRSSSIFPLSNAPYSRSASTKSRPLLRRLLDLRRSNSSADKHNRGGPALIDDGTEGGFTIGRGLAAKATNEPRLRCTEFDKNGNVTLVNGEFKKSELIAKYGLLPRDLRKIDSSTLPHILVRPSAILINLLHLRVLIKHDRVLVFDAYGSTDSYMQSLFVYDLEGKLQQKQTGGFGALPYEFRALEAVLISVTTGLEEEFNGVREPVVRVLRALEEDIDRDKLRHLLIYSKKLGTFEQKARLVRDAIDDLLEADDDLAAMYLTERANGVQREEDDHQEVEMLLESYHKVCDEIVQASGNLVTSIRNTEEVVKAILDANRNSLMLLDLKFSIGTLGLATGTLFSALYGMNLKNFIEESDLGFGAVSMTCFMITAVVCVYGLAKLRKLQRVRMWGEAGVGGAPLTPLTTRSGILSGHRSNWRADSIEPVWGSLPGEARTERIKRLRETAAAAAARSASADATAQRASALRSSANANGGAPKGSEHSPTRETEASGSSA.

Residues 1 to 56 constitute a mitochondrion transit peptide; it reads MLSSSHLKPSAPSATLLRFLRSQSDFLSVNSSRCARPSRSKPYVHQILPCNASSRA. The helical transmembrane segment at 423 to 443 threads the bilayer; it reads LMLLDLKFSIGTLGLATGTLF. A YGMN motif is present at residues 447–450; that stretch reads YGMN. The helical transmembrane segment at 462-482 threads the bilayer; sequence FGAVSMTCFMITAVVCVYGLA. Positions 552–577 are enriched in low complexity; the sequence is AARSASADATAQRASALRSSANANGG. The interval 552-597 is disordered; the sequence is AARSASADATAQRASALRSSANANGGAPKGSEHSPTRETEASGSSA. Over residues 581–591 the composition is skewed to basic and acidic residues; sequence GSEHSPTRETE.

Belongs to the CorA metal ion transporter (MIT) (TC 1.A.35) family. In terms of assembly, homopentamer. Forms homooligomers. Interacts with MFM1.

It is found in the mitochondrion inner membrane. High-conductance magnesium-selective channel that mediates the influx of magnesium into the mitochondrial matrix. Essential for the splicing of mRNA group II introns in mitochondria by affecting mitochondrial magnesium concentrations, which are critical for group II intron splicing. It also suppresses a variety of mitochondrial intron mutations and its absence may disturb the assembly of mitochondrial membrane complexes. This Aspergillus fumigatus (strain ATCC MYA-4609 / CBS 101355 / FGSC A1100 / Af293) (Neosartorya fumigata) protein is Mitochondrial inner membrane magnesium transporter mrs2 (mrs2).